We begin with the raw amino-acid sequence, 313 residues long: GTPase Era (313 aa).

The 174-residue stretch at 13–186 folds into the Era-type G domain; that stretch reads RSGFVSFVGR…ADLLVGLLPE (174 aa). Residues 21-28 are G1; that stretch reads GRPNAGKS. 21–28 serves as a coordination point for GTP; it reads GRPNAGKS. A G2 region spans residues 47–51; sequence QTTRT. The tract at residues 68–71 is G3; that stretch reads DTPG. GTP is bound by residues 68–72 and 131–134; these read DTPGL and TKTD. Residues 131–134 form a G4 region; the sequence is TKTD. Residues 165–167 are G5; the sequence is VSA. Positions 217–299 constitute a KH type-2 domain; it reads LRDELPHSVA…YLDLHVKIAK (83 aa).

Belongs to the TRAFAC class TrmE-Era-EngA-EngB-Septin-like GTPase superfamily. Era GTPase family. Monomer.

The protein localises to the cytoplasm. The protein resides in the cell membrane. Functionally, an essential GTPase that binds both GDP and GTP, with rapid nucleotide exchange. Plays a role in 16S rRNA processing and 30S ribosomal subunit biogenesis and possibly also in cell cycle regulation and energy metabolism. This is GTPase Era from Nocardioides sp. (strain ATCC BAA-499 / JS614).